A 324-amino-acid chain; its full sequence is Beta-ketoacyl-[acyl-carrier-protein] synthase III (324 aa).

Residues cysteine 112 and histidine 249 contribute to the active site. An ACP-binding region spans residues 250–254; the sequence is QANDR. Residue asparagine 279 is part of the active site.

The protein belongs to the thiolase-like superfamily. FabH family. In terms of assembly, homodimer.

The protein localises to the cytoplasm. The catalysed reaction is malonyl-[ACP] + acetyl-CoA + H(+) = 3-oxobutanoyl-[ACP] + CO2 + CoA. The protein operates within lipid metabolism; fatty acid biosynthesis. Its function is as follows. Catalyzes the condensation reaction of fatty acid synthesis by the addition to an acyl acceptor of two carbons from malonyl-ACP. Catalyzes the first condensation reaction which initiates fatty acid synthesis and may therefore play a role in governing the total rate of fatty acid production. Possesses both acetoacetyl-ACP synthase and acetyl transacylase activities. Its substrate specificity determines the biosynthesis of branched-chain and/or straight-chain of fatty acids. In Streptococcus pneumoniae serotype 2 (strain D39 / NCTC 7466), this protein is Beta-ketoacyl-[acyl-carrier-protein] synthase III.